We begin with the raw amino-acid sequence, 333 residues long: 4-hydroxyproline 2-epimerase (333 aa).

The active-site Proton acceptor is the cysteine 90. Residues 91-92 (GH), histidine 223, and aspartate 249 contribute to the substrate site. Cysteine 253 acts as the Proton donor in catalysis. 254-255 (GT) lines the substrate pocket.

Belongs to the proline racemase family.

The enzyme catalyses trans-4-hydroxy-L-proline = cis-4-hydroxy-D-proline. Its function is as follows. Catalyzes the epimerization of trans-4-hydroxy-L-proline (t4LHyp) to cis-4-hydroxy-D-proline (c4DHyp). May be involved in a degradation pathway of t4LHyp, which would allow S.novella to grow on t4LHyp as a sole carbon source. The sequence is that of 4-hydroxyproline 2-epimerase from Ancylobacter novellus (strain ATCC 8093 / DSM 506 / JCM 20403 / CCM 1077 / IAM 12100 / NBRC 12443 / NCIMB 10456) (Starkeya novella).